The following is a 156-amino-acid chain: Small ribosomal subunit protein uS7 (156 aa).

The protein belongs to the universal ribosomal protein uS7 family. In terms of assembly, part of the 30S ribosomal subunit. Contacts proteins S9 and S11.

In terms of biological role, one of the primary rRNA binding proteins, it binds directly to 16S rRNA where it nucleates assembly of the head domain of the 30S subunit. Is located at the subunit interface close to the decoding center, probably blocks exit of the E-site tRNA. The sequence is that of Small ribosomal subunit protein uS7 from Chromohalobacter salexigens (strain ATCC BAA-138 / DSM 3043 / CIP 106854 / NCIMB 13768 / 1H11).